A 394-amino-acid polypeptide reads, in one-letter code: Lipase 3 (394 aa).

The signal sequence occupies residues 1–20 (MTRGALKVTILLVGLGLVLA). N-linked (GlcNAc...) asparagine glycosylation occurs at asparagine 131. Catalysis depends on charge relay system residues serine 164 and histidine 369.

It belongs to the AB hydrolase superfamily. Lipase family. In terms of tissue distribution, fat body.

The sequence is that of Lipase 3 (Lip3) from Drosophila melanogaster (Fruit fly).